Here is a 313-residue protein sequence, read N- to C-terminus: Adhesin MafA 2 (313 aa).

The first 14 residues, 1-14, serve as a signal peptide directing secretion; that stretch reads MKTLLLLIPLVLTA. Cys15 carries the N-palmitoyl cysteine lipid modification. Cys15 carries S-diacylglycerol cysteine lipidation. The segment covering 282–297 has biased composition (polar residues); sequence GDTTAQNRPDFKQNNG. Residues 282–313 are disordered; that stretch reads GDTTAQNRPDFKQNNGKKPDVGNEVIRRRKGG.

This sequence belongs to the MafA family.

It is found in the cell outer membrane. This chain is Adhesin MafA 2 (mafA2), found in Neisseria meningitidis serogroup A / serotype 4A (strain DSM 15465 / Z2491).